The sequence spans 157 residues: Protein Smg (157 aa).

Belongs to the Smg family.

This Pectobacterium atrosepticum (strain SCRI 1043 / ATCC BAA-672) (Erwinia carotovora subsp. atroseptica) protein is Protein Smg.